An 89-amino-acid chain; its full sequence is Gamma-bungarotoxin (89 aa).

Residues Met-1–Thr-21 form the signal peptide. 5 cysteine pairs are disulfide-bonded: Cys-24-Cys-45, Cys-27-Cys-32, Cys-38-Cys-66, Cys-70-Cys-81, and Cys-82-Cys-87. The Cell attachment site signature appears at Arg-54–Asp-56.

Belongs to the three-finger toxin family. Ancestral subfamily. Orphan group V sub-subfamily. Expressed by the venom gland.

It is found in the secreted. Its function is as follows. Exhibits M2 muscarinic acetylcholine receptor (CHRM2)-blocking activity, but has a weak binding activity toward nicotinic AChR. Moreover, it inhibits collagen-induced platelet aggregation. This chain is Gamma-bungarotoxin, found in Bungarus multicinctus (Many-banded krait).